Reading from the N-terminus, the 126-residue chain is Holo-[acyl-carrier-protein] synthase (126 aa).

2 residues coordinate Mg(2+): Asp-9 and Glu-58.

The protein belongs to the P-Pant transferase superfamily. AcpS family. Mg(2+) is required as a cofactor.

The protein localises to the cytoplasm. The catalysed reaction is apo-[ACP] + CoA = holo-[ACP] + adenosine 3',5'-bisphosphate + H(+). Its function is as follows. Transfers the 4'-phosphopantetheine moiety from coenzyme A to a Ser of acyl-carrier-protein. The chain is Holo-[acyl-carrier-protein] synthase from Sodalis glossinidius (strain morsitans).